A 234-amino-acid chain; its full sequence is Sugar fermentation stimulation protein homolog (234 aa).

The protein belongs to the SfsA family.

This Citrobacter koseri (strain ATCC BAA-895 / CDC 4225-83 / SGSC4696) protein is Sugar fermentation stimulation protein homolog.